The primary structure comprises 264 residues: Thymidylate synthase (264 aa).

Residue Arg21 coordinates dUMP. (6R)-5,10-methylene-5,6,7,8-tetrahydrofolate is bound at residue His51. 126–127 (RR) contributes to the dUMP binding site. Cys146 (nucleophile) is an active-site residue. DUMP is bound by residues 166–169 (RSCD), Asn177, and 207–209 (HLY). Asp169 contacts (6R)-5,10-methylene-5,6,7,8-tetrahydrofolate. Ser263 contributes to the (6R)-5,10-methylene-5,6,7,8-tetrahydrofolate binding site.

This sequence belongs to the thymidylate synthase family. Bacterial-type ThyA subfamily. In terms of assembly, homodimer.

The protein resides in the cytoplasm. It catalyses the reaction dUMP + (6R)-5,10-methylene-5,6,7,8-tetrahydrofolate = 7,8-dihydrofolate + dTMP. It functions in the pathway pyrimidine metabolism; dTTP biosynthesis. In terms of biological role, catalyzes the reductive methylation of 2'-deoxyuridine-5'-monophosphate (dUMP) to 2'-deoxythymidine-5'-monophosphate (dTMP) while utilizing 5,10-methylenetetrahydrofolate (mTHF) as the methyl donor and reductant in the reaction, yielding dihydrofolate (DHF) as a by-product. This enzymatic reaction provides an intracellular de novo source of dTMP, an essential precursor for DNA biosynthesis. The polypeptide is Thymidylate synthase (Buchnera aphidicola subsp. Acyrthosiphon pisum (strain 5A)).